Here is a 119-residue protein sequence, read N- to C-terminus: Large ribosomal subunit protein bL20 (119 aa).

Belongs to the bacterial ribosomal protein bL20 family.

Binds directly to 23S ribosomal RNA and is necessary for the in vitro assembly process of the 50S ribosomal subunit. It is not involved in the protein synthesizing functions of that subunit. This Xylella fastidiosa (strain M23) protein is Large ribosomal subunit protein bL20.